Reading from the N-terminus, the 1429-residue chain is Autophagy-related protein 11 (1429 aa).

Coiled coils occupy residues 540-579, 616-808, 842-985, and 1106-1135; these read GDDD…QSQA, EGID…LDDH, TLVE…HMNS, and RRIK…LQKD. Residues 574 to 622 are disordered; that stretch reads HRQSQASRPGNLFQPQGSQQRERVNSASSVRSSRFDDRRRSSEGIDPLM. Positions 575 to 592 are enriched in polar residues; it reads RQSQASRPGNLFQPQGSQ. A compositionally biased stretch (basic and acidic residues) spans 606–616; sequence SRFDDRRRSSE. 2 disordered regions span residues 1205 to 1224 and 1333 to 1405; these read SKSL…ENDN and RAHN…PTRR. 2 stretches are compositionally biased toward polar residues: residues 1206 to 1215 and 1333 to 1362; these read KSLQPSSETE and RAHN…GQKN. Over residues 1384–1398 the composition is skewed to basic and acidic residues; that stretch reads KADEQPRSVVQREDS.

The protein belongs to the ATG11 family. As to quaternary structure, homodimer and potential homooligomers. Interacts with ATG1 kinase and the ATG19 and ATG34 cargo protein transporters. Interacts with ATG9, ATG17 and ATG20.

The protein resides in the preautophagosomal structure membrane. It localises to the vacuole membrane. Involved in cytoplasm to vacuole transport (Cvt), pexophagy, mitophagy and nucleophagy. Recruits mitochondria for their selective degradation via autophagy (mitophagy) during starvation, through its interaction with ATG32. Works as scaffold proteins that recruit ATG proteins to the pre-autophagosome (PAS), the site of vesicle/autophagosome formation. Required for ATG9 anterograde transport from the mitochondria to the PAS. Also recruits the ATG19-prAPE1 complex to the PAS. Required for the Cvt vesicles completion. Autophagy is required for proper vegetative growth, asexual/sexual reproduction, and full virulence. Autophagy is particularly involved in the biosynthesis of deoxynivalenol (DON), an important virulence determinant. This is Autophagy-related protein 11 from Gibberella zeae (strain ATCC MYA-4620 / CBS 123657 / FGSC 9075 / NRRL 31084 / PH-1) (Wheat head blight fungus).